Here is a 121-residue protein sequence, read N- to C-terminus: Apoptin (121 aa).

Disordered stretches follow at residues 1 to 28 (MNAL…LETP) and 57 to 121 (LRSA…CIRL). A compositionally biased stretch (polar residues) spans 58–70 (RSATADNSESTGF). Basic and acidic residues predominate over residues 88–102 (RSCDPSEYRVSELKE).

This sequence belongs to the gyrovirus apoptin family.

It is found in the host nucleus. Functionally, may act as transcriptional regulator. Induces apoptosis in infected cells. Element of infectious replication cycle. The sequence is that of Apoptin (VP3) from Gallus gallus (Chicken).